Here is a 136-residue protein sequence, read N- to C-terminus: Large ribosomal subunit protein uL16c (136 aa).

It belongs to the universal ribosomal protein uL16 family. In terms of assembly, part of the 50S ribosomal subunit.

The protein resides in the plastid. The protein localises to the chloroplast. This chain is Large ribosomal subunit protein uL16c, found in Oryza nivara (Indian wild rice).